The sequence spans 423 residues: Adenylosuccinate synthetase (423 aa).

GTP contacts are provided by residues 12-18 and 40-42; these read GDEGKGK and GHT. The active-site Proton acceptor is aspartate 13. Positions 13 and 40 each coordinate Mg(2+). Residues 13-16, 38-41, threonine 128, arginine 142, glutamine 223, threonine 238, and arginine 302 contribute to the IMP site; these read DEGK and NAGH. Histidine 41 functions as the Proton donor in the catalytic mechanism. 298 to 304 provides a ligand contact to substrate; that stretch reads TTTGRPR. GTP contacts are provided by residues arginine 304, 330 to 332, and 412 to 414; these read RLD and CIG.

Belongs to the adenylosuccinate synthetase family. As to quaternary structure, homodimer. The cofactor is Mg(2+).

It localises to the cytoplasm. It catalyses the reaction IMP + L-aspartate + GTP = N(6)-(1,2-dicarboxyethyl)-AMP + GDP + phosphate + 2 H(+). The protein operates within purine metabolism; AMP biosynthesis via de novo pathway; AMP from IMP: step 1/2. Functionally, plays an important role in the de novo pathway of purine nucleotide biosynthesis. Catalyzes the first committed step in the biosynthesis of AMP from IMP. The chain is Adenylosuccinate synthetase from Dehalococcoides mccartyi (strain ATCC BAA-2266 / KCTC 15142 / 195) (Dehalococcoides ethenogenes (strain 195)).